The following is a 251-amino-acid chain: tRNA pseudouridine synthase A (251 aa).

D52 functions as the Nucleophile in the catalytic mechanism. Y113 serves as a coordination point for substrate.

Belongs to the tRNA pseudouridine synthase TruA family. In terms of assembly, homodimer.

The enzyme catalyses uridine(38/39/40) in tRNA = pseudouridine(38/39/40) in tRNA. Formation of pseudouridine at positions 38, 39 and 40 in the anticodon stem and loop of transfer RNAs. This chain is tRNA pseudouridine synthase A, found in Brucella abortus (strain 2308).